The sequence spans 242 residues: 4-hydroxy-tetrahydrodipicolinate reductase (242 aa).

NAD(+) is bound by residues 8–13, 75–77, and 99–102; these read GSNGRM, GTT, and ATNM. H131 functions as the Proton donor/acceptor in the catalytic mechanism. Residue H132 participates in (S)-2,3,4,5-tetrahydrodipicolinate binding. The active-site Proton donor is the K135. 141–142 provides a ligand contact to (S)-2,3,4,5-tetrahydrodipicolinate; the sequence is GT.

It belongs to the DapB family.

The protein localises to the cytoplasm. It carries out the reaction (S)-2,3,4,5-tetrahydrodipicolinate + NAD(+) + H2O = (2S,4S)-4-hydroxy-2,3,4,5-tetrahydrodipicolinate + NADH + H(+). The catalysed reaction is (S)-2,3,4,5-tetrahydrodipicolinate + NADP(+) + H2O = (2S,4S)-4-hydroxy-2,3,4,5-tetrahydrodipicolinate + NADPH + H(+). Its pathway is amino-acid biosynthesis; L-lysine biosynthesis via DAP pathway; (S)-tetrahydrodipicolinate from L-aspartate: step 4/4. Functionally, catalyzes the conversion of 4-hydroxy-tetrahydrodipicolinate (HTPA) to tetrahydrodipicolinate. In Campylobacter lari (strain RM2100 / D67 / ATCC BAA-1060), this protein is 4-hydroxy-tetrahydrodipicolinate reductase.